A 207-amino-acid chain; its full sequence is Thymidylate kinase (207 aa).

12 to 19 lines the ATP pocket; that stretch reads GVDGAGKS.

This sequence belongs to the thymidylate kinase family.

The enzyme catalyses dTMP + ATP = dTDP + ADP. In terms of biological role, phosphorylation of dTMP to form dTDP in both de novo and salvage pathways of dTTP synthesis. This Bordetella petrii (strain ATCC BAA-461 / DSM 12804 / CCUG 43448) protein is Thymidylate kinase.